The sequence spans 258 residues: Sec-independent protein translocase protein TatC (258 aa).

At 2–23 the chain is on the cytoplasmic side; sequence SVEDTQPLITHLIELRKRLLNC. The helical transmembrane segment at 24–44 threads the bilayer; it reads IIAVIVIFLCLVYFANDIYHL. The Periplasmic segment spans residues 45 to 75; sequence VSAPLIKQLPQGSTMIATDVASPFFTPIKLT. The helical transmembrane segment at 76 to 96 threads the bilayer; sequence FMVSLILSAPVILYQVWAFIA. Residues 97–115 are Cytoplasmic-facing; the sequence is PALYKHERRLVVPLLVSSS. The helical transmembrane segment at 116–136 threads the bilayer; that stretch reads LLFYIGMAFAYFVVFPLAFGF. At 137–156 the chain is on the periplasmic side; the sequence is LANTAPEGVQVSTDIASYLS. The chain crosses the membrane as a helical span at residues 157–177; sequence FVMALFMAFGVSFEVPVAIVL. The Cytoplasmic portion of the chain corresponds to 178–192; sequence LCWMGITSPEDLRKK. Residues 193–210 form a helical membrane-spanning segment; that stretch reads RPYVLVGAFVVGMLLTPP. Residue Asp211 is a topological domain, periplasmic. Residues 212 to 232 form a helical membrane-spanning segment; sequence VFSQTLLAIPMYCLFEIGVFF. The Cytoplasmic portion of the chain corresponds to 233–258; that stretch reads SRFYVGKGRNREEENDAEAESEKTEE.

This sequence belongs to the TatC family. The Tat system comprises two distinct complexes: a TatABC complex, containing multiple copies of TatA, TatB and TatC subunits, and a separate TatA complex, containing only TatA subunits. Substrates initially bind to the TatABC complex, which probably triggers association of the separate TatA complex to form the active translocon. TatC can form a distinct, stable, multimeric complex independent of TatA and TatB. Each of TatA, TatB and TatC are able to interact in pairs without the third partner. Interacts with the signal sequence of DmsA and DmsD.

The protein localises to the cell inner membrane. In terms of biological role, part of the twin-arginine translocation (Tat) system that transports large folded proteins containing a characteristic twin-arginine motif in their signal peptide across membranes. Together with TatB, TatC is part of a receptor directly interacting with Tat signal peptides. The polypeptide is Sec-independent protein translocase protein TatC (Escherichia coli (strain K12)).